We begin with the raw amino-acid sequence, 101 residues long: Anti-sigma factor RshA (101 aa).

The inhibits SigH sigma factor activity stretch occupies residues 9 to 15 (DAHADHD). Cysteine 23 is a binding site for iron-sulfur cluster. Inhibits SigH sigma factor activity stretches follow at residues 28–34 (AEVWTLL) and 38–44 (CTPETRE). Iron-sulfur cluster is bound by residues histidine 49, cysteine 53, and cysteine 56. Threonine 94 bears the Phosphothreonine mark.

It belongs to the zinc-associated anti-sigma factor (ZAS) superfamily. As to quaternary structure, interacts with cognate sigma factor SigH under reducing conditions. Binding inhibits the interaction of SigH with the RNA polymerase catalytic core. The cofactor is iron-sulfur cluster. Phosphorylated, probably by PknB. Phosphorylation decreases interaction with SigH, leading to increased SigH-mediated transcription.

Its function is as follows. An redox-regulated anti-sigma factor for extracytoplasmic function (ECF) sigma factor SigH. ECF sigma factors are held in an inactive form by a cognate anti-sigma factor. RshA and some peptides derived from it inhibit the sigma factor activity of SigH. Probably releases SigH during oxidative stress. In Mycobacterium tuberculosis (strain CDC 1551 / Oshkosh), this protein is Anti-sigma factor RshA (rshA).